The following is a 398-amino-acid chain: Pentalenolactone synthase (398 aa).

Position 347 (cysteine 347) interacts with heme.

This sequence belongs to the cytochrome P450 family. Heme is required as a cofactor.

The enzyme catalyses pentalenolactone F + 2 reduced [2Fe-2S]-[ferredoxin] + O2 + 2 H(+) = pentalenolactone + 2 oxidized [2Fe-2S]-[ferredoxin] + 2 H2O. It participates in antibiotic biosynthesis; pentalenolactone biosynthesis. Functionally, catalyzes the final step in the biosynthesis of the sesquiterpenoid antibiotic pentalenolactone by mediating the oxidative rearrangement of pentalenolactone F to pentalenolactone. The protein is Pentalenolactone synthase (penM) of Streptomyces exfoliatus (Streptomyces hydrogenans).